We begin with the raw amino-acid sequence, 37 residues long: Large ribosomal subunit protein bL36c (37 aa).

This sequence belongs to the bacterial ribosomal protein bL36 family.

The protein resides in the plastid. The protein localises to the chloroplast. The protein is Large ribosomal subunit protein bL36c of Liriodendron tulipifera (Tuliptree).